Reading from the N-terminus, the 96-residue chain is uncharacterized protein (96 aa).

[3Fe-4S] cluster is bound by residues cysteine 10, cysteine 16, and cysteine 55. Positions 67 to 96 (AGDGERASADPAPSPAEAERHAAKDQHNLG) are disordered. Residues 83–96 (EAERHAAKDQHNLG) show a composition bias toward basic and acidic residues.

[3Fe-4S] cluster is required as a cofactor.

In terms of biological role, electron transport protein for the cytochrome systems. This is an uncharacterized protein from Bradyrhizobium diazoefficiens (strain JCM 10833 / BCRC 13528 / IAM 13628 / NBRC 14792 / USDA 110).